A 247-amino-acid chain; its full sequence is Probable transcriptional regulatory protein Spro_2779 (247 aa).

The protein belongs to the TACO1 family.

It is found in the cytoplasm. The sequence is that of Probable transcriptional regulatory protein Spro_2779 from Serratia proteamaculans (strain 568).